The chain runs to 138 residues: ATP synthase epsilon chain (138 aa).

Belongs to the ATPase epsilon chain family. F-type ATPases have 2 components, CF(1) - the catalytic core - and CF(0) - the membrane proton channel. CF(1) has five subunits: alpha(3), beta(3), gamma(1), delta(1), epsilon(1). CF(0) has three main subunits: a, b and c.

The protein resides in the cell membrane. In terms of biological role, produces ATP from ADP in the presence of a proton gradient across the membrane. This is ATP synthase epsilon chain (atpC) from Streptococcus mutans serotype c (strain ATCC 700610 / UA159).